The primary structure comprises 153 residues: Inner membrane protein YjiG (153 aa).

The Periplasmic segment spans residues 1–31 (MTTQVRKNVMDMFIDGARRGFTIATTNLLPN). The helical transmembrane segment at 32–52 (VVMAFVIIQALKITGLLDWVG) threads the bilayer. Topologically, residues 53-68 (HICEPVMALWGLPGEA) are cytoplasmic. The next 2 helical transmembrane spans lie at 69 to 89 (ATVL…AASL) and 90 to 110 (ATAG…MYLM). The Cytoplasmic segment spans residues 111-132 (GNPVQNVGRCLGTAEVNAKYYP). Residues 133–153 (HIITVCVINALLSIWVMQLIV) form a helical membrane-spanning segment.

This sequence belongs to the SpmB family.

It is found in the cell inner membrane. This Escherichia coli O157:H7 protein is Inner membrane protein YjiG (yjiG).